A 317-amino-acid polypeptide reads, in one-letter code: Probable cell division protein WhiA (317 aa).

The H-T-H motif DNA-binding region spans 275 to 308 (SLKELGEMLVPKVGKSGVNHRMRKIDELAEKLEE).

It belongs to the WhiA family.

Its function is as follows. Involved in cell division and chromosome segregation. The polypeptide is Probable cell division protein WhiA (Desulfitobacterium hafniense (strain DSM 10664 / DCB-2)).